Here is a 210-residue protein sequence, read N- to C-terminus: ATP-dependent Clp protease proteolytic subunit (210 aa).

Serine 106 serves as the catalytic Nucleophile. Histidine 131 is an active-site residue.

This sequence belongs to the peptidase S14 family. Fourteen ClpP subunits assemble into 2 heptameric rings which stack back to back to give a disk-like structure with a central cavity, resembling the structure of eukaryotic proteasomes.

The protein resides in the cytoplasm. It carries out the reaction Hydrolysis of proteins to small peptides in the presence of ATP and magnesium. alpha-casein is the usual test substrate. In the absence of ATP, only oligopeptides shorter than five residues are hydrolyzed (such as succinyl-Leu-Tyr-|-NHMec, and Leu-Tyr-Leu-|-Tyr-Trp, in which cleavage of the -Tyr-|-Leu- and -Tyr-|-Trp bonds also occurs).. Functionally, cleaves peptides in various proteins in a process that requires ATP hydrolysis. Has a chymotrypsin-like activity. Plays a major role in the degradation of misfolded proteins. In Afipia carboxidovorans (strain ATCC 49405 / DSM 1227 / KCTC 32145 / OM5) (Oligotropha carboxidovorans), this protein is ATP-dependent Clp protease proteolytic subunit.